The primary structure comprises 310 residues: Junctional adhesion molecule C (310 aa).

A signal peptide spans 1 to 31 (MALRRPPRLRLCARLPDFFLLLLFRGCLIGA). Topologically, residues 32 to 241 (VNLKSSNRTP…EQEMEVYDLN (210 aa)) are extracellular. The Ig-like V-type domain maps to 35 to 127 (KSSNRTPVVQ…VARNDRKEID (93 aa)). Intrachain disulfides connect cysteine 53–cysteine 115 and cysteine 160–cysteine 219. N-linked (GlcNAc...) asparagine glycosylation is found at asparagine 104 and asparagine 192. An Ig-like C2-type domain is found at 139–236 (PVTPVCRVPK…SARCEEQEME (98 aa)). The helical transmembrane segment at 242–262 (IGGIIGGVLVVLAVLALITLG) threads the bilayer. Topologically, residues 263–310 (ICCAYRRGYFINNKQDGESYKNPGKPDGVNYIRTDEEGDFRHKSSFVI) are cytoplasmic. S-palmitoyl cysteine attachment occurs at residues cysteine 264 and cysteine 265.

Belongs to the immunoglobulin superfamily. Interacts with ITGAM. Interacts with GORASP2. Post-translationally, proteolytically cleaved from endothelial cells surface into a soluble form by ADAM10 and ADAM17; the release of soluble JAM3 is increased by pro-inflammatory factors. S-palmitoylated by ZDHHC7. S-palmitoylation promotes expression at tight junctions. As to expression, detected on round and elongated spermatids (at protein level). Highest expression in placenta, brain and kidney. Significant expression is detected on platelets. Expressed in intestinal mucosa cells. Expressed in the vascular endothelium. Found in serum (at protein level). Also detected in the synovial fluid of patients with rheumatoid arthritis, psoriatic arthritis or ostearthritis (at protein level).

It is found in the cell membrane. The protein localises to the cell junction. Its subcellular location is the desmosome. It localises to the tight junction. The protein resides in the secreted. Its function is as follows. Junctional adhesion protein that mediates heterotypic cell-cell interactions with its cognate receptor JAM2 to regulate different cellular processes. Plays a role in homing and mobilization of hematopoietic stem and progenitor cells within the bone marrow. At the surface of bone marrow stromal cells, it contributes to the retention of the hematopoietic stem and progenitor cells expressing JAM3. Plays a central role in leukocytes extravasation by facilitating transmigration through the endothelium. Plays a role in spermatogenesis where JAM2 and JAM3, which are respectively expressed by Sertoli and germ cells, mediate an interaction between both cell types and play an essential role in the anchorage of germ cells onto Sertoli cells and the assembly of cell polarity complexes during spermatid differentiation. Also functions as a counter-receptor for ITGAM, mediating leukocyte-platelet interactions and is involved in the regulation of transepithelial migration of polymorphonuclear neutrophils (PMN). Plays a role in angiogenesis. Plays a role in the regulation of cell migration. During myogenesis, it is involved in myocyte fusion. In terms of biological role, promotes chemotaxis of vascular endothelial cells and stimulates angiogenesis. The chain is Junctional adhesion molecule C (JAM3) from Homo sapiens (Human).